A 291-amino-acid polypeptide reads, in one-letter code: MSALNWKPFVYGGLASITAECGTFPIDLTKTRLQIQGQTNDAKFKEIRYRGMLHALVRIGREEGLKALYSGIAPAMLRQASYGTIKIGTYQSLKRLFIERPEDETLPINVICGILSGVISSTIANPTDVLKIRMQAQSNTIQGGMIGNFMNIYQQEGTRGLWKGVSLTAQRAAIVVGVELPVYDITKKHLILSGLMGDTVYTHFLSSFTCGLAGALASNPVDVVRTRMMNQRVLRDGRCSGYTGTLDCLLQTWKNEGFFALYKGFWPNWLRLGPWNIIFFVTYEQLKKLDL.

Residue serine 2 is modified to N-acetylserine. Solcar repeat units follow at residues 7-96 (KPFV…LKRL), 104-189 (ETLP…TKKH), and 198-289 (DTVY…LKKL). The next 6 helical transmembrane spans lie at 9 to 26 (FVYG…TFPI), 71 to 89 (GIAP…KIGT), 105 to 124 (TLPI…STIA), 164 to 183 (GVSL…LPVY), 204 to 224 (FLSS…VDVV), and 264 to 283 (GFWP…FVTY).

It belongs to the mitochondrial carrier (TC 2.A.29) family. As to quaternary structure, interacts with VDAC1.

It localises to the mitochondrion inner membrane. It catalyses the reaction sulfite(in) + sulfate(out) = sulfite(out) + sulfate(in). The catalysed reaction is thiosulfate(in) + sulfate(out) = thiosulfate(out) + sulfate(in). It carries out the reaction sulfate(out) + phosphate(in) = sulfate(in) + phosphate(out). The enzyme catalyses oxalate(in) + sulfate(out) = oxalate(out) + sulfate(in). It catalyses the reaction malonate(in) + sulfate(out) = malonate(out) + sulfate(in). The catalysed reaction is maleate(in) + sulfate(out) = maleate(out) + sulfate(in). It carries out the reaction (S)-malate(in) + sulfate(out) = (S)-malate(out) + sulfate(in). The enzyme catalyses (3S)-citramalate(in) + sulfate(out) = (3S)-citramalate(out) + sulfate(in). It catalyses the reaction (3R)-citramalate(in) + sulfate(out) = (3R)-citramalate(out) + sulfate(in). The catalysed reaction is sulfate(out) + succinate(in) = sulfate(in) + succinate(out). It carries out the reaction (S,S)-tartrate(in) + sulfate(out) = (S,S)-tartrate(out) + sulfate(in). The enzyme catalyses (2R,3R)-tartrate(in) + sulfate(out) = (2R,3R)-tartrate(out) + sulfate(in). It catalyses the reaction D-aspartate(in) + sulfate(out) = D-aspartate(out) + sulfate(in). The catalysed reaction is L-aspartate(in) + sulfate(out) = L-aspartate(out) + sulfate(in). It carries out the reaction sulfate(in) = sulfate(out). The enzyme catalyses phosphate(in) = phosphate(out). It catalyses the reaction (S)-malate(out) = (S)-malate(in). Its activity is regulated as follows. Increased activity at pH 6.0. sulfate/sulfate exchange activity is inhibited strongly by pyridoxal 5'-phosphate, bathophenanthroline and the organic mercurials mersalyl, p-chloromercuribenzoate and HgCl2. Antiporter that transports inorganic anions (sulfate, sulfite, thiosulfate and phosphate) and, to a lesser extent, a variety of dicarboxylates (e.g. malonate, malate and citramalate) and, even more so, aspartate. The sulfate/sulfate exchange is much higher than the phosphate/phosphate and malate/malate exchanges. The transport affinities is higher for sulfate and thiosulfate than for any other substrate. May catalyze the export of sulfite and thiosulfate (the hydrogen sulfide degradation products) from the mitochondria, thereby modulating the level of the hydrogen sulfide. Also may mediate a very low unidirectional transport of sulfate, phosphate and (S)-malate. The chain is Kidney mitochondrial carrier protein 1 from Homo sapiens (Human).